The chain runs to 859 residues: Homeobox-leucine zipper protein HOX32 (859 aa).

A disordered region spans residues 7–31 (AAVHGVGRQDRSSPGGGGAPQVDTG). A DNA-binding region (homeobox) is located at residues 29–92 (DTGKYVRYTP…NRRCREKQRK (64 aa)). Residues 100 to 129 (VNRKLTAMNKLLMEENDRLQKQVSRLVYEN) adopt a coiled-coil conformation. Over residues 146–164 (TSCESVVTSGQHHQQQNPA) the composition is skewed to polar residues. The disordered stretch occupies residues 146 to 172 (TSCESVVTSGQHHQQQNPAATRPQRDA). One can recognise an START domain in the interval 171-393 (DANNPAGLLA…LRHIRQIAHE (223 aa)).

It belongs to the HD-ZIP homeobox family. Class III subfamily. In terms of tissue distribution, expressed in seedlings, roots, stems, leaf sheaths and blades and panicles.

It is found in the nucleus. Probable transcription factor. The protein is Homeobox-leucine zipper protein HOX32 (HOX32) of Oryza sativa subsp. japonica (Rice).